A 401-amino-acid polypeptide reads, in one-letter code: Multidrug resistance protein MdtH (401 aa).

11 helical membrane-spanning segments follow: residues 13-33, 34-54, 99-116, 139-159, 165-185, 214-234, 243-263, 277-297, 299-319, 340-360, and 368-388; these read YFLLLDNLLVVLGFFIVFPLI, SIRFVDQLGWAAVLVGLALGL, PWILWLACALSGLGGTLF, LLMMQDSAGAVIGALIGSWLL, FVCWTGAVIFILAAGWNVWLL, VLTLTGYYMLSVQVMLMLPIV, AAVKWMYAIEAALSLTLLYPI, LMFGLLIMTLSLFPVGLITHL, TLFMFICFFYMGSIIAEPARE, LGLALGGALGYTGGGWMYDTG, and LPWFLLGVIGLITLVGLYWQF.

Belongs to the major facilitator superfamily. DHA1 family. MdtH (TC 2.A.1.2.21) subfamily.

The protein resides in the cell inner membrane. In Yersinia enterocolitica serotype O:8 / biotype 1B (strain NCTC 13174 / 8081), this protein is Multidrug resistance protein MdtH.